A 465-amino-acid chain; its full sequence is ATP synthase subunit beta (465 aa).

An ATP-binding site is contributed by Gly-152–Thr-159.

Belongs to the ATPase alpha/beta chains family. As to quaternary structure, F-type ATPases have 2 components, CF(1) - the catalytic core - and CF(0) - the membrane proton channel. CF(1) has five subunits: alpha(3), beta(3), gamma(1), delta(1), epsilon(1). CF(0) has three main subunits: a(1), b(2) and c(9-12). The alpha and beta chains form an alternating ring which encloses part of the gamma chain. CF(1) is attached to CF(0) by a central stalk formed by the gamma and epsilon chains, while a peripheral stalk is formed by the delta and b chains.

It localises to the cell membrane. The catalysed reaction is ATP + H2O + 4 H(+)(in) = ADP + phosphate + 5 H(+)(out). Produces ATP from ADP in the presence of a proton gradient across the membrane. The catalytic sites are hosted primarily by the beta subunits. The polypeptide is ATP synthase subunit beta (Ruminiclostridium cellulolyticum (strain ATCC 35319 / DSM 5812 / JCM 6584 / H10) (Clostridium cellulolyticum)).